Reading from the N-terminus, the 242-residue chain is Tryptophan synthase alpha chain (242 aa).

Active-site proton acceptor residues include E31 and D42.

The protein belongs to the TrpA family. As to quaternary structure, tetramer of two alpha and two beta chains.

The catalysed reaction is (1S,2R)-1-C-(indol-3-yl)glycerol 3-phosphate + L-serine = D-glyceraldehyde 3-phosphate + L-tryptophan + H2O. The protein operates within amino-acid biosynthesis; L-tryptophan biosynthesis; L-tryptophan from chorismate: step 5/5. The alpha subunit is responsible for the aldol cleavage of indoleglycerol phosphate to indole and glyceraldehyde 3-phosphate. This Staphylococcus aureus (strain Mu3 / ATCC 700698) protein is Tryptophan synthase alpha chain.